The sequence spans 757 residues: 5-methyltetrahydropteroyltriglutamate--homocysteine methyltransferase (757 aa).

5-methyltetrahydropteroyltri-L-glutamate is bound by residues 17 to 20 and lysine 117; that span reads RELK. L-homocysteine is bound by residues 432–434 and glutamate 485; that span reads IGS. Residues 432–434 and glutamate 485 contribute to the L-methionine site; that span reads IGS. Residues 516-517 and tryptophan 562 each bind 5-methyltetrahydropteroyltri-L-glutamate; that span reads RC. Aspartate 600 lines the L-homocysteine pocket. L-methionine is bound at residue aspartate 600. Glutamate 606 lines the 5-methyltetrahydropteroyltri-L-glutamate pocket. Histidine 642, cysteine 644, and glutamate 666 together coordinate Zn(2+). Histidine 695 serves as the catalytic Proton donor. Cysteine 727 contacts Zn(2+).

This sequence belongs to the vitamin-B12 independent methionine synthase family. The cofactor is Zn(2+).

The catalysed reaction is 5-methyltetrahydropteroyltri-L-glutamate + L-homocysteine = tetrahydropteroyltri-L-glutamate + L-methionine. It functions in the pathway amino-acid biosynthesis; L-methionine biosynthesis via de novo pathway; L-methionine from L-homocysteine (MetE route): step 1/1. In terms of biological role, catalyzes the transfer of a methyl group from 5-methyltetrahydrofolate to homocysteine resulting in methionine formation. The sequence is that of 5-methyltetrahydropteroyltriglutamate--homocysteine methyltransferase from Erwinia tasmaniensis (strain DSM 17950 / CFBP 7177 / CIP 109463 / NCPPB 4357 / Et1/99).